The primary structure comprises 489 residues: Glycogen synthase (489 aa).

Arginine 20 is a binding site for ADP-alpha-D-glucose.

The protein belongs to the glycosyltransferase 1 family. Bacterial/plant glycogen synthase subfamily.

The catalysed reaction is [(1-&gt;4)-alpha-D-glucosyl](n) + ADP-alpha-D-glucose = [(1-&gt;4)-alpha-D-glucosyl](n+1) + ADP + H(+). It participates in glycan biosynthesis; glycogen biosynthesis. Synthesizes alpha-1,4-glucan chains using ADP-glucose. This Chlorobium phaeovibrioides (strain DSM 265 / 1930) (Prosthecochloris vibrioformis (strain DSM 265)) protein is Glycogen synthase.